Here is an 841-residue protein sequence, read N- to C-terminus: MLGILNKVFDPTKRTLSRYEKKANEIDALKADIEKLSDEALKQKTIEFKERLEKGETVDDLLVEAFAVVREASRRVTGMFPFKVQLMGGVALHEGNIAEMKTGEGKTLTSTMPVYLNALSGKGVHVVTVNEYLASRDAEEMGKIFEFLGLTVGLNLNSLSKDEKREAYAADITYSTNNELGFDYLRDNMVLYKEQMVQRPLHFAVIDEVDSILIDEARTPLIISGQAAKSTKLYVQANAFVRTLKADQDYTYDVKTKGVQLTEEGMTKAEKAFGIENLFDVRHVALNHHIAQALKAHAAMHKDVDYVVEDGQVVIVDSFTGRLMKGRRYSDGLHQAIEAKEGLEIQNESMTLATITFQNYFRMYEKLAGMTGTAKTEEEEFRNIYNMQVVTIPTNKPIARDDRPDLIYRTMEGKFKAVAEDVAQRYMVGQPVLVGTVAVETSELISRLLKNKGIPHQVLNAKNHEREAQIIEDAGQKGAVTIATNMAGRGTDIKLGEGVKELGGLAVIGTERHESRRIDNQLRGRSGRQGDPGITQFYLSMEDELMKRFGAERTMAMLDRFGMDDSTPIQSKMVSRAVESSQKRVEGNNFDARKQLLQYDDVLRQQREVIYKQRFEVIDSDNLRSIVENMIKASLERAVASYTPKEDLPEEWNLDGLVELVNANFLDEGGVEKSDIFGKEPEEITELIYDRIKTKYDEKEERYGSEQMREFEKVIVLREVDTKWMDHIDAMDQLRQGIHLRAYAQTNPLREYQMEGFAMFENMIAAIEDDVAKFVMKAEIENNLEREEVIQGQTTAHQPKEGDEEKQAKKKPVRKAVDIGRNDPCYCGSGKKYKNCCGRTE.

Residues glutamine 85, 103 to 107 (GEGKT), and aspartate 492 each bind ATP. Residues 790–814 (IQGQTTAHQPKEGDEEKQAKKKPVR) form a disordered region. Basic and acidic residues predominate over residues 798–807 (QPKEGDEEKQ). Zn(2+)-binding residues include cysteine 825, cysteine 827, cysteine 836, and cysteine 837.

Belongs to the SecA family. As to quaternary structure, monomer and homodimer. Part of the essential Sec protein translocation apparatus which comprises SecA, SecYEG and auxiliary proteins SecDF. Other proteins may also be involved. Zn(2+) serves as cofactor.

The protein localises to the cell membrane. It is found in the cytoplasm. It carries out the reaction ATP + H2O + cellular proteinSide 1 = ADP + phosphate + cellular proteinSide 2.. Part of the Sec protein translocase complex. Interacts with the SecYEG preprotein conducting channel. Has a central role in coupling the hydrolysis of ATP to the transfer of proteins into and across the cell membrane, serving as an ATP-driven molecular motor driving the stepwise translocation of polypeptide chains across the membrane. The chain is Protein translocase subunit SecA from Bacillus licheniformis (strain ATCC 14580 / DSM 13 / JCM 2505 / CCUG 7422 / NBRC 12200 / NCIMB 9375 / NCTC 10341 / NRRL NRS-1264 / Gibson 46).